We begin with the raw amino-acid sequence, 40 residues long: MAVAALAMYGGTCGACAVLACNWNVRECGIIWKNLFEVKK.

The signal sequence occupies residues Met1–Ala17.

This is an uncharacterized protein from Archaeoglobus fulgidus (strain ATCC 49558 / DSM 4304 / JCM 9628 / NBRC 100126 / VC-16).